Here is a 182-residue protein sequence, read N- to C-terminus: Small heat shock protein hspG1 (182 aa).

Positions 43–182 (IKRIDIIPSM…SNSSFKININ (140 aa)) constitute a sHSP domain.

The protein belongs to the small heat shock protein (HSP20) family.

The sequence is that of Small heat shock protein hspG1 (hspG1) from Dictyostelium discoideum (Social amoeba).